A 131-amino-acid polypeptide reads, in one-letter code: Neurophysin 2 (131 aa).

7 disulfide bridges follow: Cys-10/Cys-55, Cys-13/Cys-27, Cys-21/Cys-45, Cys-28/Cys-35, Cys-62/Cys-74, Cys-68/Cys-86, and Cys-75/Cys-80.

It belongs to the vasopressin/oxytocin family.

The protein localises to the secreted. Its function is as follows. Neurophysin 2 specifically binds vasopressin. The protein is Neurophysin 2 of Anser anser anser (Western greylag goose).